The sequence spans 493 residues: Sorting nexin-4 (493 aa).

The interval 1-77 is disordered; it reads MAVIDQDNFS…ILDCTVSDPH (77 aa). Over residues 7–28 the composition is skewed to polar residues; that stretch reads DNFSNISWHSEQNAESAASTAQ. Positions 56–65 are enriched in basic and acidic residues; that stretch reads MEHDELDHSG. The PX domain maps to 68-190; it reads ILDCTVSDPH…AFLESPDWNA (123 aa). A 1,2-diacyl-sn-glycero-3-phospho-(1D-myo-inositol-3-phosphate) is bound by residues R111, T113, K137, and R156. Coiled-coil stretches lie at residues 248–292, 338–363, and 405–442; these read EIKE…QKLI, SGTLKNLLKAREQKQLDYEQLTEYLN, and EQARRDRQRKLELRIEELTREVEVARNESESFAEQVSR.

Belongs to the sorting nexin family.

The protein localises to the cytoplasm. Its subcellular location is the membrane. It is found in the endosome membrane. In terms of biological role, sorting nexin, involved in the separation or division of vacuoles throughout the entire life cycle of the cells. Involved in retrieval of late-Golgi SNAREs from post-Golgi endosomes to the trans-Golgi network, for cytoplasm to vacuole transport (Cvt), and autophagy of large cargos including mitophagy, pexophagy and glycophagy. This Neurospora crassa (strain ATCC 24698 / 74-OR23-1A / CBS 708.71 / DSM 1257 / FGSC 987) protein is Sorting nexin-4 (vsp-5).